The sequence spans 264 residues: Protein Saci_1508 (264 aa).

This sequence belongs to the CinA family.

The chain is Protein Saci_1508 from Sulfolobus acidocaldarius (strain ATCC 33909 / DSM 639 / JCM 8929 / NBRC 15157 / NCIMB 11770).